A 487-amino-acid chain; its full sequence is uncharacterized protein (487 aa).

3 disordered regions span residues 35-153 (VSRK…SGDQ), 237-345 (NTTK…AKAL), and 358-395 (QKRK…SSAA). Acidic residues predominate over residues 54–96 (FDQEDILDTVPEQTDENEDEAGDDELESEKEELDYDEEEDDED). Over residues 97–132 (RRERTSRYTSEKKGSRKDSVEGDENKKENGQDETKR) the composition is skewed to basic and acidic residues. Positions 241-253 (SKSRGRDTRKRRS) are enriched in basic residues. Over residues 254–264 (SSYSSTSSSSD) the composition is skewed to low complexity. Composition is skewed to basic and acidic residues over residues 273–338 (SRSD…KHSA) and 358–383 (QKRK…KKEV). Over residues 385–395 (TTVSTNTSSAA) the composition is skewed to low complexity.

This is an uncharacterized protein from Caenorhabditis elegans.